We begin with the raw amino-acid sequence, 350 residues long: Galactokinase (350 aa).

14-17 (EHTD) contributes to the substrate binding site. Residues Ser46 and 96 to 102 (GAGLSSS) contribute to the ATP site. 2 residues coordinate Mg(2+): Ser102 and Glu134. The active-site Proton acceptor is Asp146. Tyr196 is a substrate binding site.

It belongs to the GHMP kinase family. GalK subfamily.

The protein localises to the cytoplasm. It catalyses the reaction alpha-D-galactose + ATP = alpha-D-galactose 1-phosphate + ADP + H(+). Its pathway is carbohydrate metabolism; galactose metabolism. Functionally, catalyzes the transfer of the gamma-phosphate of ATP to D-galactose to form alpha-D-galactose-1-phosphate (Gal-1-P). The polypeptide is Galactokinase (Thermotoga maritima (strain ATCC 43589 / DSM 3109 / JCM 10099 / NBRC 100826 / MSB8)).